Here is an 882-residue protein sequence, read N- to C-terminus: Putative HTH-type transcriptional regulator Rv0890c (882 aa).

An HTH luxR-type domain is found at 814 to 879; the sequence is PARGWGSLTP…QLVDEAARRG (66 aa). Positions 838–857 form a DNA-binding region, H-T-H motif; sequence NKDIAKRLFVSPRTVQTHLT.

This chain is Putative HTH-type transcriptional regulator Rv0890c, found in Mycobacterium tuberculosis (strain ATCC 25618 / H37Rv).